The sequence spans 44 residues: Photosystem I reaction center subunit IX (44 aa).

A helical transmembrane segment spans residues 7–27; that stretch reads YLSVAPVLSTLWFASLAGLLI.

The protein belongs to the PsaJ family.

Its subcellular location is the plastid. The protein localises to the chloroplast thylakoid membrane. Functionally, may help in the organization of the PsaE and PsaF subunits. The polypeptide is Photosystem I reaction center subunit IX (Barbarea verna (Land cress)).